Consider the following 765-residue polypeptide: Proton-coupled zinc antiporter SLC30A5 (765 aa).

Met-1 is modified (N-acetylmethionine). Residues 1–32 (MEEKYGGDVLAGPGGGGGLGPVDVPSARLTKY) lie on the Cytoplasmic side of the membrane. A helical transmembrane segment spans residues 33–53 (IVLLCFTKFLKAVGLFESYDL). Residues 54–56 (LKA) are Lumenal-facing. The chain crosses the membrane as a helical span at residues 57-77 (VHIVQFIFILKLGTAFFMVLF). The Cytoplasmic portion of the chain corresponds to 78–98 (QKPFSSGKTITKHQWIKIFKH). A helical transmembrane segment spans residues 99-119 (AVAGCIISLLWFFGLTLCGPL). Residue Arg-120 is a topological domain, lumenal. A helical membrane pass occupies residues 121-141 (TLLLFEHSDIVVISLLSVLFT). Residues 142–152 (SSGGGPAKTRG) are Cytoplasmic-facing. A helical membrane pass occupies residues 153 to 173 (AAFFIIAVICLLLFDNDDLMA). Residues 174–193 (KMAEHPEGHHDSALTHMLYT) are Lumenal-facing. A helical transmembrane segment spans residues 194 to 214 (AIAFLGVADHKGGVLLLVLAL). At 215 to 238 (CCKVGFHTASRKLSVDVGGAKRLQ) the chain is on the cytoplasmic side. The helical transmembrane segment at 239–259 (ALSHLVSVLLLCPWVIVLSVT) threads the bilayer. Over 260–267 (TESKVESW) the chain is Lumenal. A helical membrane pass occupies residues 268–288 (FSLIMPFATVIFFVMILDFYV). At 289–303 (DSICSVKMEVSKCAR) the chain is on the cytoplasmic side. The helical transmembrane segment at 304–324 (YGSFPIFISALLFGNFWTHPI) threads the bilayer. The Lumenal segment spans residues 325–342 (TDQLRAMNKAAHQESTEH). A helical membrane pass occupies residues 343-363 (VLSGGVVVSAIFFILSANILS). At 364-418 (SPSKRGQKGTLIGYSPEGTPLYNFMGDAFQHSSQSIPRFIKESLKQILEESDSRQ) the chain is on the cytoplasmic side. A helical membrane pass occupies residues 419–439 (IFYFLCLNLLFTFVELFYGVL). The mediates homodimerization with SLC30A6 stretch occupies residues 420 to 640 (FYFLCLNLLF…ILIFLSVVPL (221 aa)). The Lumenal portion of the chain corresponds to 440–448 (TNSLGLISD). The chain crosses the membrane as a helical span at residues 449 to 469 (GFHMLFDCSALVMGLFAALMS). Zn(2+) is bound by residues His-451 and Asp-455. The Cytoplasmic segment spans residues 470–483 (RWKATRIFSYGYGR). A helical membrane pass occupies residues 484–504 (IEILSGFINGLFLIVIAFFVF). The Lumenal segment spans residues 505–520 (MESVARLIDPPELDTH). The helical transmembrane segment at 521–541 (MLTPVSVGGLIVNLIGICAFS) threads the bilayer. The tract at residues 542-578 (HAHSHAHGASQGSCHSSDHSHSHHMHGHSDHGHGHSH) is his-rich loop; required for zinc transport. The Cytoplasmic portion of the chain corresponds to 542 to 592 (HAHSHAHGASQGSCHSSDHSHSHHMHGHSDHGHGHSHGSAGGGMNANMRGV). Residues 551–581 (SQGSCHSSDHSHSHHMHGHSDHGHGHSHGSA) are disordered. The chain crosses the membrane as a helical span at residues 593-613 (FLHVLADTLGSIGVIVSTVLI). Zn(2+)-binding residues include His-595 and Asp-599. Over 614 to 617 (EQFG) the chain is Lumenal. A helical transmembrane segment spans residues 618-638 (WFIADPLCSLFIAILIFLSVV). At 639-765 (PLIKDACQVL…KYCKDGTYIM (127 aa)) the chain is on the cytoplasmic side.

Belongs to the cation diffusion facilitator (CDF) transporter (TC 2.A.4) family. SLC30A subfamily. Heterodimer with SLC30A6/ZNT6; form a functional zinc ion transmembrane transporter. Post-translationally, could homodimerize through the formation of dityrosine bonds upon oxidative stress. In terms of tissue distribution, ubiquitously expressed. Highly expressed in pancreas, liver and kidney. Expressed abundantly in insulin-containing beta cells, undetectable in other endocrine cell types including glucagon-secreting alpha cells and most acinar cells (at protein level).

It localises to the golgi apparatus. The protein localises to the golgi stack membrane. Its subcellular location is the cytoplasmic vesicle. It is found in the COPII-coated vesicle membrane. The protein resides in the secretory vesicle membrane. It localises to the trans-Golgi network membrane. The protein localises to the endoplasmic reticulum membrane. Its subcellular location is the cell membrane. It is found in the apical cell membrane. It catalyses the reaction Zn(2+)(in) + 2 H(+)(out) = Zn(2+)(out) + 2 H(+)(in). Functionally, together with SLC30A6 forms a functional proton-coupled zinc ion antiporter mediating zinc entry into the lumen of organelles along the secretory pathway. By contributing to zinc ion homeostasis within the early secretory pathway, regulates the activation and folding of enzymes like alkaline phosphatases and enzymes involved in phosphatidylinositol glycan anchor biosynthesis. Through the transport of zinc into secretory granules of pancreatic beta-cells, plays an important role in the storage and secretion of insulin. In terms of biological role, zinc ion:proton antiporter mediating influx and efflux of zinc at the plasma membrane. This chain is Proton-coupled zinc antiporter SLC30A5, found in Homo sapiens (Human).